A 986-amino-acid chain; its full sequence is P3N-PIPO polyprotein (986 aa).

In terms of domain architecture, Peptidase S30 spans 141–284; that stretch reads KLTEGQMNHL…QGVMDSMVQF (144 aa). Active-site for P1 proteinase activity residues include His-192, Asp-201, and Ser-235. The Involved in interaction with stylet and aphid transmission signature appears at 334–337; sequence KITC. Positions 592–594 match the Involved in virions binding and aphid transmission motif; sequence PTK. The region spanning 618-740 is the Peptidase C6 domain; sequence LYIARQGFCY…ESDIKHYRVG (123 aa). Residues Cys-626 and His-699 each act as for helper component proteinase activity in the active site.

It belongs to the potyviridae P3N-PIPO polyprotein family. In terms of assembly, interacts (via PIPO domain) with host PCaP1 protein; this interaction may help to anchor the movement complex to the plasma membrane from which the complex could move to the plasmodesmata. Potyviral RNA is expressed as two polyproteins which undergo post-translational proteolytic processing. Genome polyprotein is processed by NIa-pro, P1 and HC-pro proteinases resulting in the production of at least ten individual proteins. P3N-PIPO is cleaved by P1 and HC-pro proteinases resulting in the production of three individual proteins. The P1 proteinase and the HC-pro cleave only their respective C-termini autocatalytically.

The protein localises to the host cell junction. Its subcellular location is the host plasmodesma. The enzyme catalyses Hydrolyzes a Gly-|-Gly bond at its own C-terminus, commonly in the sequence -Tyr-Xaa-Val-Gly-|-Gly, in the processing of the potyviral polyprotein.. Functionally, required for aphid transmission and also has proteolytic activity. Only cleaves a Gly-Gly dipeptide at its own C-terminus. Interacts with virions and aphid stylets. Acts as a suppressor of RNA-mediated gene silencing, also known as post-transcriptional gene silencing (PTGS), a mechanism of plant viral defense that limits the accumulation of viral RNAs. May have RNA-binding activity. Allows efficient cell to cell propagation, by bypassing the host cell wall barrier. Transports viral genome to neighboring plant cells directly through plasmosdesmata, without any budding. This Capsicum (peppers) protein is P3N-PIPO polyprotein.